The chain runs to 68 residues: MVQKKSQSSKTVTVEQIGSPIRNSQIQRATLKGLGLNKMHRRRVLEDTLCVRGMIAKVQHLVRVIDES.

This sequence belongs to the universal ribosomal protein uL30 family. In terms of assembly, part of the 50S ribosomal subunit.

This Bartonella henselae (strain ATCC 49882 / DSM 28221 / CCUG 30454 / Houston 1) (Rochalimaea henselae) protein is Large ribosomal subunit protein uL30.